The chain runs to 335 residues: Beta-ketoacyl-[acyl-carrier-protein] synthase III (335 aa).

Catalysis depends on residues Cys119 and His261. Positions 262–266 are ACP-binding; that stretch reads QANQR. The active site involves Asn291.

This sequence belongs to the thiolase-like superfamily. FabH family. As to quaternary structure, homodimer.

It is found in the cytoplasm. It catalyses the reaction malonyl-[ACP] + acetyl-CoA + H(+) = 3-oxobutanoyl-[ACP] + CO2 + CoA. It functions in the pathway lipid metabolism; fatty acid biosynthesis. Its function is as follows. Catalyzes the condensation reaction of fatty acid synthesis by the addition to an acyl acceptor of two carbons from malonyl-ACP. Catalyzes the first condensation reaction which initiates fatty acid synthesis and may therefore play a role in governing the total rate of fatty acid production. Possesses both acetoacetyl-ACP synthase and acetyl transacylase activities. Its substrate specificity determines the biosynthesis of branched-chain and/or straight-chain of fatty acids. In Prochlorococcus marinus (strain MIT 9312), this protein is Beta-ketoacyl-[acyl-carrier-protein] synthase III.